The chain runs to 589 residues: Glutamine--fructose-6-phosphate aminotransferase [isomerizing] (589 aa).

Residue cysteine 2 is the Nucleophile; for GATase activity of the active site. Residues 2–221 (CGIIGIVSLR…DDELGFITPE (220 aa)) enclose the Glutamine amidotransferase type-2 domain. SIS domains are found at residues 286 to 426 (VIEE…KMEK) and 445 to 579 (IGEE…PDKP). Lysine 584 (for Fru-6P isomerization activity) is an active-site residue.

As to quaternary structure, homodimer.

It localises to the cytoplasm. The catalysed reaction is D-fructose 6-phosphate + L-glutamine = D-glucosamine 6-phosphate + L-glutamate. Its function is as follows. Catalyzes the first step in hexosamine metabolism, converting fructose-6P into glucosamine-6P using glutamine as a nitrogen source. The sequence is that of Glutamine--fructose-6-phosphate aminotransferase [isomerizing] from Sulfurisphaera tokodaii (strain DSM 16993 / JCM 10545 / NBRC 100140 / 7) (Sulfolobus tokodaii).